A 657-amino-acid polypeptide reads, in one-letter code: Zinc finger protein 630 (657 aa).

Positions 8–79 (VTFEDVAVDF…ESELSRWIYP (72 aa)) constitute a KRAB domain. 2 consecutive C2H2-type zinc fingers follow at residues 263-285 (NVCS…QRIH) and 291-313 (YVCG…QRIH). Residues 319–341 (YECTKYGRAFSRKSPFTVHQRVH) form a C2H2-type 3; degenerate zinc finger. C2H2-type zinc fingers lie at residues 347 to 369 (YECF…QRVH), 375 to 397 (FECS…QITH), 403 to 425 (YECT…QRTH), 431 to 453 (YKCG…QRIH), 459 to 481 (YVCT…QRLH), 487 to 509 (YMCT…QRIH), 515 to 537 (YQCG…LRVH), 543 to 565 (YECT…QRGH), and 571 to 593 (YECS…QKTH). The C2H2-type 13; degenerate zinc-finger motif lies at 599–621 (PECAESGMTFFWKSQMITYQRRH). The segment at 627–649 (SRCSDCGKAFCQHVYFTGHQNPY) adopts a C2H2-type 14; degenerate zinc-finger fold.

Belongs to the krueppel C2H2-type zinc-finger protein family.

The protein localises to the nucleus. May be involved in transcriptional regulation. The chain is Zinc finger protein 630 (ZNF630) from Homo sapiens (Human).